The following is a 390-amino-acid chain: Guanine nucleotide exchange factor for Rab-3A (390 aa).

Residues 1-60 are disordered; sequence MWSGQPHPDEGHPPPLEAVPVPWKSVGPCKSHRESLGGLPETPAGEEAQGEEGPAATQLD. The span at 40–58 shows a compositional bias: low complexity; the sequence is PETPAGEEAQGEEGPAATQ. A coiled-coil region spans residues 73–161; it reads EKGSEFLKEE…AEVTALKTLV (89 aa). The interval 166-194 is disordered; the sequence is PASPNRELHPQLLSPTKAGPRKGHLRHKS. Ser-168 and Ser-179 each carry phosphoserine. Residues 184–194 show a composition bias toward basic residues; sequence GPRKGHLRHKS.

Belongs to the SEC2 family. As to quaternary structure, interacts with RAB3A and IHPK1 through the coiled-coil domain. This interaction is competitive. IHPK1 kinase activity is not required for this interaction.

Functionally, guanine nucleotide exchange factor (GEF) which may activate RAB3A, a GTPase that regulates synaptic vesicle exocytosis. Promotes the exchange of GDP to GTP, converting inactive GDP-bound Rab proteins into their active GTP-bound form. May also activate RAB8A and RAB8B. This chain is Guanine nucleotide exchange factor for Rab-3A (RAB3IL1), found in Bos taurus (Bovine).